A 247-amino-acid polypeptide reads, in one-letter code: ATP synthase subunit a, chloroplastic (247 aa).

Helical transmembrane passes span 38–58 (QVLITSWVVITILLGSVIIAV), 95–115 (VPFIGTMFLFIFVSNWSGALL), 134–154 (INTTVALALLTSAAYFYAGLS), 199–219 (LVVVVLVSLVPLVVPIPVMFL), and 220–240 (GLFTSGIQALIFATLAAAYIG).

It belongs to the ATPase A chain family. As to quaternary structure, F-type ATPases have 2 components, CF(1) - the catalytic core - and CF(0) - the membrane proton channel. CF(1) has five subunits: alpha(3), beta(3), gamma(1), delta(1), epsilon(1). CF(0) has four main subunits: a, b, b' and c.

It is found in the plastid. The protein resides in the chloroplast thylakoid membrane. Key component of the proton channel; it plays a direct role in the translocation of protons across the membrane. The polypeptide is ATP synthase subunit a, chloroplastic (Oryza nivara (Indian wild rice)).